An 84-amino-acid polypeptide reads, in one-letter code: Keratin-associated protein 19-4 (84 aa).

It belongs to the KRTAP type 19 family. Interacts with hair keratins.

Its function is as follows. In the hair cortex, hair keratin intermediate filaments are embedded in an interfilamentous matrix, consisting of hair keratin-associated proteins (KRTAP), which are essential for the formation of a rigid and resistant hair shaft through their extensive disulfide bond cross-linking with abundant cysteine residues of hair keratins. The matrix proteins include the high-sulfur and high-glycine-tyrosine keratins. This Homo sapiens (Human) protein is Keratin-associated protein 19-4 (KRTAP19-4).